A 2611-amino-acid chain; its full sequence is Highly reducing polyketide synthase ATEG_07659 (2611 aa).

The Ketosynthase family 3 (KS3) domain maps to 10 to 409 (SEPIAIIGLS…GTNSHVIVEG (400 aa)). Active-site for beta-ketoacyl synthase activity residues include Cys157, His292, and His330. The tract at residues 537–844 (MVFTGQGAQW…VRFVEAFTDM (308 aa)) is malonyl-CoA:ACP transacylase (MAT) domain. Residues 969 to 1109 (HDLLGVLVPG…GLITVQMAAD (141 aa)) are N-terminal hotdog fold. The 324-residue stretch at 969 to 1292 (HDLLGVLVPG…CQSLGRSAPG (324 aa)) folds into the PKS/mFAS DH domain. The interval 970–1289 (DLLGVLVPGT…GLVCQSLGRS (320 aa)) is dehydratase (DH) domain. His1001 functions as the Proton acceptor; for dehydratase activity in the catalytic mechanism. The segment at 1128–1292 (GYTRRIDPQD…CQSLGRSAPG (165 aa)) is C-terminal hotdog fold. Catalysis depends on Asp1199, which acts as the Proton donor; for dehydratase activity. The methyltransferase (CMet) domain stretch occupies residues 1469–1602 (FGQLKSLLAA…GATLLLMETT (134 aa)). The segment at 1898-2213 (GLLDTLAFGD…TGKHLGKLVL (316 aa)) is enoyl reductase (ER) domain. A ketoreductase (KR) domain region spans residues 2236–2416 (ASYLLVGGVG…AVSLDMGVIK (181 aa)). Residues 2499–2509 (SRAQAQQAGGD) are compositionally biased toward low complexity. Residues 2499 to 2520 (SRAQAQQAGGDSDSEPLSAKLR) form a disordered region. The region spanning 2527–2604 (AAARCVGDAI…ALALDVVAKS (78 aa)) is the Carrier domain. O-(pantetheine 4'-phosphoryl)serine is present on Ser2564.

It participates in secondary metabolite biosynthesis. Highly reducing polyketide synthase; part of the cluster B that mediates the biosynthesis of azasperpyranones, members of the azaphilone family that exhibit anti-cancer activities. Azasperpyranones are synthesized by 2 clusters, A and B. Cluster A is responsible for the production of the polyhydric phenol moiety while the azaphilonoid scaffold is produced by the cluster B. The non-reducing polyketide synthase ATEG_03629 produces 5-methyl orsellinic acid, which is then reduced to 5-methyl orsellinic aldehyde by the NRPS-like protein ATEG_03630. 5-methyl orsellinic aldehyde is then first hydroxylated by the FAD-dependent monooxygenase ATEG_03635 and subsequently hydroxylated by the cytochrome P450 monooxygenase ATEG_03631 to produce the unstable polyhydric phenol precursor of azasperpyranones. On the other hand, the polyketide synthase ATEG_07659 is responsible for producing the 3,5-dimethyloctadienone moiety from acetyl-CoA, three malonyl-CoA, and two S-adenosyl methionines (SAM). The 3,5-dimethyloctadienone moiety is then loaded onto the SAT domain of ATEG_07661 and extended with four malonyl-CoA and one SAM, which leads to the formation of 2,4-dihydroxy-6-(5,7-dimethyl-2-oxo-trans-3-trans-5-nonadienyl)-3-methylbenzaldehyde (compound 8) after reductive release and aldol condensation. The FAD-dependent monooxygenase ATEG_07662 is the next enzyme in the biosynthesis sequence and hydroxylates the side chain at the benzylic position of compound 8. In Aspergillus nidulans, afoF, the ortholog of the FAD-dependent oxygenase ATEG_07660, is the key enzyme for the biosynthesis of asperfuranone by catalyzing the hydroxylation at C-8 of to prevent the formation of a six-membered ring hemiacetal intermediate and thus facilitating the formation of a five-membered ring to produce asperfuranone. In Aspergillus terreus, ATEG_07660 is probably not functional, which leads to the formation of the six-membered ring hemiacetal intermediate presperpyranone instead of asperfuranone. Finally, ATEG_03636 is involved in the condensation of the polyhydric phenol moiety produced by cluster A and the perasperpyranone precursor produced by cluster B, to yield azasperpyranone A. Further modifications of azasperpyranone A result in the production of derivatives, including azasperpyranone B to F. The chain is Highly reducing polyketide synthase ATEG_07659 from Aspergillus terreus (strain NIH 2624 / FGSC A1156).